The chain runs to 669 residues: Elongation factor G 2 (669 aa).

Positions 1-276 (MSIRNIGIMA…SIVDYLPSPF (276 aa)) constitute a tr-type G domain. Residues 10–17 (AHIDAGKT), 74–78 (DTPGH), and 128–131 (NKMD) each bind GTP.

The protein belongs to the TRAFAC class translation factor GTPase superfamily. Classic translation factor GTPase family. EF-G/EF-2 subfamily.

The protein localises to the cytoplasm. In terms of biological role, catalyzes the GTP-dependent ribosomal translocation step during translation elongation. During this step, the ribosome changes from the pre-translocational (PRE) to the post-translocational (POST) state as the newly formed A-site-bound peptidyl-tRNA and P-site-bound deacylated tRNA move to the P and E sites, respectively. Catalyzes the coordinated movement of the two tRNA molecules, the mRNA and conformational changes in the ribosome. This Borreliella burgdorferi (strain ATCC 35210 / DSM 4680 / CIP 102532 / B31) (Borrelia burgdorferi) protein is Elongation factor G 2 (fusB).